Consider the following 460-residue polypeptide: Bifunctional protein GlmU (460 aa).

The interval 1–228 (MKNYALVLAA…NSLAMGVNDL (228 aa)) is pyrophosphorylase. UDP-N-acetyl-alpha-D-glucosamine contacts are provided by residues 8–11 (LAAG), K22, Q72, and 77–78 (GT). D102 contributes to the Mg(2+) binding site. UDP-N-acetyl-alpha-D-glucosamine is bound by residues G139, E154, N169, and N226. N226 is a binding site for Mg(2+). The linker stretch occupies residues 229–249 (YAISKAEKYLREYINKDHMLN). Positions 250–460 (GVSMINPETI…LISPKPKKEE (211 aa)) are N-acetyltransferase. Positions 331 and 349 each coordinate UDP-N-acetyl-alpha-D-glucosamine. H361 (proton acceptor) is an active-site residue. Y364 and N375 together coordinate UDP-N-acetyl-alpha-D-glucosamine. Residues 384–385 (NY), A421, and R438 contribute to the acetyl-CoA site.

The protein in the N-terminal section; belongs to the N-acetylglucosamine-1-phosphate uridyltransferase family. It in the C-terminal section; belongs to the transferase hexapeptide repeat family. In terms of assembly, homotrimer. The cofactor is Mg(2+).

The protein resides in the cytoplasm. The catalysed reaction is alpha-D-glucosamine 1-phosphate + acetyl-CoA = N-acetyl-alpha-D-glucosamine 1-phosphate + CoA + H(+). The enzyme catalyses N-acetyl-alpha-D-glucosamine 1-phosphate + UTP + H(+) = UDP-N-acetyl-alpha-D-glucosamine + diphosphate. The protein operates within nucleotide-sugar biosynthesis; UDP-N-acetyl-alpha-D-glucosamine biosynthesis; N-acetyl-alpha-D-glucosamine 1-phosphate from alpha-D-glucosamine 6-phosphate (route II): step 2/2. Its pathway is nucleotide-sugar biosynthesis; UDP-N-acetyl-alpha-D-glucosamine biosynthesis; UDP-N-acetyl-alpha-D-glucosamine from N-acetyl-alpha-D-glucosamine 1-phosphate: step 1/1. It participates in bacterial outer membrane biogenesis; LPS lipid A biosynthesis. Functionally, catalyzes the last two sequential reactions in the de novo biosynthetic pathway for UDP-N-acetylglucosamine (UDP-GlcNAc). The C-terminal domain catalyzes the transfer of acetyl group from acetyl coenzyme A to glucosamine-1-phosphate (GlcN-1-P) to produce N-acetylglucosamine-1-phosphate (GlcNAc-1-P), which is converted into UDP-GlcNAc by the transfer of uridine 5-monophosphate (from uridine 5-triphosphate), a reaction catalyzed by the N-terminal domain. In Acholeplasma laidlawii (strain PG-8A), this protein is Bifunctional protein GlmU.